A 272-amino-acid polypeptide reads, in one-letter code: MTTLACRKLAPHPESPRHQHAGPWLVWLHGLLGSGQDWLPVAQLCGDYPSLLIDLPGHGQSVSLSADGFADISRQLSQTLQANGIREYWLAGYSLGGRIAIYHACYGRHHGLQGLLVEGGNLGLENAELRQARLQQDRQWAQRFRQEPLPQVLDDWYQQAVFADLDPQQREQLVLLRADNHGLAVAEMLEATSLGHQPWLLPALQRLNVPYTYLCGDRDHKFLQLAQQYRLPLHTLARAGHNAHRANPGAFAAQVLAFLSQSSCLPPSSLSR.

This sequence belongs to the AB hydrolase superfamily. MenH family. Monomer.

It carries out the reaction 5-enolpyruvoyl-6-hydroxy-2-succinyl-cyclohex-3-ene-1-carboxylate = (1R,6R)-6-hydroxy-2-succinyl-cyclohexa-2,4-diene-1-carboxylate + pyruvate. It functions in the pathway quinol/quinone metabolism; 1,4-dihydroxy-2-naphthoate biosynthesis; 1,4-dihydroxy-2-naphthoate from chorismate: step 3/7. It participates in quinol/quinone metabolism; menaquinone biosynthesis. Catalyzes a proton abstraction reaction that results in 2,5-elimination of pyruvate from 2-succinyl-5-enolpyruvyl-6-hydroxy-3-cyclohexene-1-carboxylate (SEPHCHC) and the formation of 2-succinyl-6-hydroxy-2,4-cyclohexadiene-1-carboxylate (SHCHC). The protein is 2-succinyl-6-hydroxy-2,4-cyclohexadiene-1-carboxylate synthase of Yersinia pestis bv. Antiqua (strain Nepal516).